Here is a 390-residue protein sequence, read N- to C-terminus: UPF0229 protein Cbei_0567 (390 aa).

Residues 77–108 (SGVGNEKRGEKLGNGNKKLAKGNQGAGNEEGD) are disordered. The span at 89–103 (GNGNKKLAKGNQGAG) shows a compositional bias: low complexity.

This sequence belongs to the UPF0229 family.

The sequence is that of UPF0229 protein Cbei_0567 from Clostridium beijerinckii (strain ATCC 51743 / NCIMB 8052) (Clostridium acetobutylicum).